A 460-amino-acid polypeptide reads, in one-letter code: UDP-N-acetylmuramoylalanine--D-glutamate ligase (460 aa).

115–121 (GTDGKTT) is a binding site for ATP.

This sequence belongs to the MurCDEF family.

It is found in the cytoplasm. It catalyses the reaction UDP-N-acetyl-alpha-D-muramoyl-L-alanine + D-glutamate + ATP = UDP-N-acetyl-alpha-D-muramoyl-L-alanyl-D-glutamate + ADP + phosphate + H(+). It functions in the pathway cell wall biogenesis; peptidoglycan biosynthesis. Cell wall formation. Catalyzes the addition of glutamate to the nucleotide precursor UDP-N-acetylmuramoyl-L-alanine (UMA). The polypeptide is UDP-N-acetylmuramoylalanine--D-glutamate ligase (Chlorobium luteolum (strain DSM 273 / BCRC 81028 / 2530) (Pelodictyon luteolum)).